Consider the following 331-residue polypeptide: Histone-lysine N-methyltransferase, H3 lysine-9 specific dim-5 (331 aa).

Residues 77–159 (VGCSCASDEE…DCPNRVVERG (83 aa)) form the Pre-SET domain. Zn(2+) is bound by residues C79, C81, C87, C92, C94, C141, C145, C147, and C151. Residues 162 to 297 (VPLQIFRTKD…KGTELTFDYV (136 aa)) enclose the SET domain. S-adenosyl-L-methionine is bound by residues 172–174 (RGW), D215, Y217, R251, and 254–255 (NH). Positions 257, 319, 321, and 326 each coordinate Zn(2+). A Post-SET domain is found at 315-331 (EMTKCLCGTAKCRGYLW).

The protein belongs to the class V-like SAM-binding methyltransferase superfamily. Histone-lysine methyltransferase family. Suvar3-9 subfamily.

It is found in the nucleus. Its subcellular location is the chromosome. It catalyses the reaction L-lysyl(9)-[histone H3] + 3 S-adenosyl-L-methionine = N(6),N(6),N(6)-trimethyl-L-lysyl(9)-[histone H3] + 3 S-adenosyl-L-homocysteine + 3 H(+). In terms of biological role, histone methyltransferase that specifically trimethylates histone H3 to form H3K9me3. H3K9me3 marks chromatin regions for DNA methylation. Dim-5 recognizes Arg-8 to Gly-12 of the H3 tail with Thr-11 and Gly-12 being the most important specificity determinants, the recognition of whcih is important to distinguish H3K9 from H3K27 and H4K20. This is Histone-lysine N-methyltransferase, H3 lysine-9 specific dim-5 (dim-5) from Neurospora crassa (strain ATCC 24698 / 74-OR23-1A / CBS 708.71 / DSM 1257 / FGSC 987).